The following is an 825-amino-acid chain: AP-3 complex subunit delta (825 aa).

HEAT repeat units follow at residues 131–168, 169–205, 207–243, 244–281, 285–323, 324–360, 363–400, 469–513, 515–547, and 548–584; these read GLAR…QYPE, AISA…RAPK, YLEF…YEPR, LVKK…LVGH, DKLA…THPS, LVSA…KENI, IVKT…KSTY, EKRT…LAHR, LLQA…LWVE, and KIVS…IVNT. The tract at residues 787 to 825 is disordered; it reads STNQGSMGDIVLETKSPIRVEKKKSKKKKKKKEKTSGKE. The span at 807-819 shows a compositional bias: basic residues; sequence EKKKSKKKKKKKE.

Belongs to the adaptor complexes large subunit family. Adaptor protein complex 3 (AP-3) is a heterotetramer composed of 2 large adaptins (apl5 and apl6), a medium adaptin (apm3) and a small adaptin (aps3).

It localises to the golgi apparatus. The protein localises to the cytoplasmic vesicle. It is found in the clathrin-coated vesicle membrane. Functionally, part of the AP-3 complex, an adaptor-related complex which is not clathrin-associated. The complex is associated with the Golgi region as well as more peripheral structures. It facilitates the budding of vesicles from the Golgi membrane and may be directly involved in trafficking to the vacuole. The sequence is that of AP-3 complex subunit delta (apl5) from Schizosaccharomyces pombe (strain 972 / ATCC 24843) (Fission yeast).